A 422-amino-acid chain; its full sequence is Cystine lyase CORI3 (422 aa).

It belongs to the class-I pyridoxal-phosphate-dependent aminotransferase family. Homodimer. Pyridoxal 5'-phosphate is required as a cofactor. As to expression, expressed in cotyledons, sepals, pistils, flower buds, phloem companion cells and vascular tissues of petiole, leaf, filament and fruit.

The catalysed reaction is L-cystine + H2O = S-sulfanyl-L-cysteine + pyruvate + NH4(+). Functionally, possesses cystine lyase activity in vitro. Does not possess tyrosine aminotransferase, alanine aminotransferase, aspartate aminotransferase and tryptophan aminotransferase activities. The chain is Cystine lyase CORI3 from Arabidopsis thaliana (Mouse-ear cress).